A 66-amino-acid polypeptide reads, in one-letter code: ATP synthase F(0) complex subunit 8 (66 aa).

Residues T8–F24 form a helical membrane-spanning segment. N6-acetyllysine; alternate is present on K54. K54 is modified (N6-succinyllysine; alternate). An N6-acetyllysine modification is found at K57.

It belongs to the ATPase protein 8 family. In terms of assembly, component of the ATP synthase complex composed at least of ATP5F1A/subunit alpha, ATP5F1B/subunit beta, ATP5MC1/subunit c (homooctomer), MT-ATP6/subunit a, MT-ATP8/subunit 8, ATP5ME/subunit e, ATP5MF/subunit f, ATP5MG/subunit g, ATP5MK/subunit k, ATP5MJ/subunit j, ATP5F1C/subunit gamma, ATP5F1D/subunit delta, ATP5F1E/subunit epsilon, ATP5PF/subunit F6, ATP5PB/subunit b, ATP5PD/subunit d, ATP5PO/subunit OSCP. ATP synthase complex consists of a soluble F(1) head domain (subunits alpha(3) and beta(3)) - the catalytic core - and a membrane F(0) domain - the membrane proton channel (subunits c, a, 8, e, f, g, k and j). These two domains are linked by a central stalk (subunits gamma, delta, and epsilon) rotating inside the F1 region and a stationary peripheral stalk (subunits F6, b, d, and OSCP). Interacts with PRICKLE3.

The protein localises to the mitochondrion membrane. Subunit 8, of the mitochondrial membrane ATP synthase complex (F(1)F(0) ATP synthase or Complex V) that produces ATP from ADP in the presence of a proton gradient across the membrane which is generated by electron transport complexes of the respiratory chain. ATP synthase complex consist of a soluble F(1) head domain - the catalytic core - and a membrane F(1) domain - the membrane proton channel. These two domains are linked by a central stalk rotating inside the F(1) region and a stationary peripheral stalk. During catalysis, ATP synthesis in the catalytic domain of F(1) is coupled via a rotary mechanism of the central stalk subunits to proton translocation. In vivo, can only synthesize ATP although its ATP hydrolase activity can be activated artificially in vitro. Part of the complex F(0) domain. The sequence is that of ATP synthase F(0) complex subunit 8 from Ovis aries (Sheep).